The sequence spans 430 residues: Probable histidine--tRNA ligase, cytoplasmic (430 aa).

The protein belongs to the class-II aminoacyl-tRNA synthetase family.

The protein localises to the cytoplasm. The catalysed reaction is tRNA(His) + L-histidine + ATP = L-histidyl-tRNA(His) + AMP + diphosphate + H(+). This is Probable histidine--tRNA ligase, cytoplasmic from Vairimorpha ceranae (strain BRL01) (Microsporidian parasite).